Here is a 375-residue protein sequence, read N- to C-terminus: Alcohol dehydrogenase B (375 aa).

Zn(2+)-binding residues include cysteine 40, histidine 62, cysteine 92, cysteine 95, cysteine 98, cysteine 106, and cysteine 169.

Belongs to the zinc-containing alcohol dehydrogenase family. The cofactor is Zn(2+).

It localises to the cytoplasm. It carries out the reaction a primary alcohol + NAD(+) = an aldehyde + NADH + H(+). The catalysed reaction is a secondary alcohol + NAD(+) = a ketone + NADH + H(+). This chain is Alcohol dehydrogenase B (adhB), found in Mycobacterium bovis (strain ATCC BAA-935 / AF2122/97).